The sequence spans 605 residues: Sulfite reductase [NADPH] flavoprotein alpha-component (605 aa).

Residues 68 to 206 (VTVLYGSQTG…PAAEWLEGVL (139 aa)) form the Flavodoxin-like domain. FMN contacts are provided by residues 74–78 (SQTGN), 121–126 (STHGEG), and 154–185 (VLAL…KRIS). The disordered stretch occupies residues 213-234 (GGGSAAPAPAAASQTGESSYSR). The FAD-binding FR-type domain occupies 235-454 (TNPFRAEVLE…VQHNQNFKLP (220 aa)). 392 to 395 (RLYS) serves as a coordination point for FAD. NADP(+) contacts are provided by residues aspartate 495 and 525–533 (SRDTEEKVY).

As to quaternary structure, alpha(8)-beta(8). The alpha component is a flavoprotein, the beta component is a hemoprotein. FAD serves as cofactor. The cofactor is FMN.

The enzyme catalyses hydrogen sulfide + 3 NADP(+) + 3 H2O = sulfite + 3 NADPH + 4 H(+). It participates in sulfur metabolism; hydrogen sulfide biosynthesis; hydrogen sulfide from sulfite (NADPH route): step 1/1. Functionally, component of the sulfite reductase complex that catalyzes the 6-electron reduction of sulfite to sulfide. This is one of several activities required for the biosynthesis of L-cysteine from sulfate. The flavoprotein component catalyzes the electron flow from NADPH -&gt; FAD -&gt; FMN to the hemoprotein component. This is Sulfite reductase [NADPH] flavoprotein alpha-component (cysJ) from Bacillus subtilis (strain 168).